Here is a 696-residue protein sequence, read N- to C-terminus: Neurogenic protein big brain (696 aa).

The Cytoplasmic segment spans residues 1–71; that stretch reads MADESLHTVP…LEFWRSIISE (71 aa). Residue Ser-46 is modified to Phosphoserine. At Thr-47 the chain carries Phosphothreonine. The helical transmembrane segment at 72-93 threads the bilayer; that stretch reads CLASFMYVFIVCGAAAGVGVGA. The Extracellular portion of the chain corresponds to 94–97; the sequence is SVSS. The chain crosses the membrane as a helical span at residues 98–118; that stretch reads VLLATALASGLAMATLTQCFL. Residues 119–143 lie on the Cytoplasmic side of the membrane; the sequence is HISGAHINPAVTLALCVVRSISPIR. Positions 126–128 match the NPA 1 motif; that stretch reads NPA. The chain crosses the membrane as a helical span at residues 144-167; that stretch reads AAMYITAQCGGGIAGAALLYGVTV. The Extracellular portion of the chain corresponds to 168 to 189; that stretch reads PGYQGNLQAAISHSAALAAWER. The helical transmembrane segment at 190–208 threads the bilayer; the sequence is FGVEFILTFLVVLCYFVST. Over 209-213 the chain is Cytoplasmic; sequence DPMKK. Residues 214 to 234 traverse the membrane as a helical segment; the sequence is FMGNSAASIGCAYSACCFVSM. At 235-256 the chain is on the extracellular side; it reads PYLNPARSLGPSFVLNKWDSHW. The NPA 2 motif lies at 238-240; the sequence is NPA. Residues 257–273 form a helical membrane-spanning segment; it reads VYWFGPLVGGMASGLVY. The residue at position 273 (Tyr-273) is a Phosphotyrosine; by Src. At 274-696 the chain is on the cytoplasmic side; sequence EYIFNSRNRN…HYGMLPLRPN (423 aa). At Ser-300 the chain carries Phosphoserine. Positions 314 to 345 are disordered; it reads NKYQQSQGTYPRGQSNGNGGGQAAGNGQHQAA. A Phosphotyrosine; by Abl modification is found at Tyr-367. The residue at position 384 (Tyr-384) is a Phosphotyrosine; by Src. Phosphoserine is present on Ser-394. 2 disordered regions span residues 436-634 and 650-696; these read MRTQ…KVSA and TSQG…LRPN. Low complexity-rich tracts occupy residues 439-451 and 462-472; these read QQQQQQQQQQQQQ and QNQNVQNQMQQ. Residue Tyr-478 is modified to Phosphotyrosine; by Src. The span at 487-532 shows a compositional bias: low complexity; that stretch reads QQQPIQQQQQQQQQQQLQQQQPNMGVQQQQMQPPPQMMSDPQQQPQ. The segment covering 549–558 has biased composition (basic and acidic residues); the sequence is GNHKYDRRDP. Phosphoserine is present on Ser-576. A compositionally biased stretch (low complexity) spans 576–587; sequence SDDSSYGSYHGS. Over residues 599–616 the composition is skewed to pro residues; that stretch reads EPSPPPPPMLMYAPPPQP. Tyr-610 is modified (phosphotyrosine; by Abl). The segment covering 659-686 has biased composition (low complexity); the sequence is QQQQQQQQQQQQQQQQQQQQMMMQQQQQ.

Belongs to the MIP/aquaporin (TC 1.A.8) family. In terms of processing, phosphorylated at its C-terminus. As to expression, detected in all tissues with neurogenic abilities, for example the neurogenic ectoderm.

The protein resides in the membrane. In terms of biological role, essential for proper differentiation of ectoderm. Acts synergistically with neurogenic locus proteins Notch and Delta during the separation of neural and epidermal cell lineages in response to the lateral inhibition signal. Voltage-insensitive monovalent cation channel. Ion transport is blocked by the presence of divalent cations. In Drosophila melanogaster (Fruit fly), this protein is Neurogenic protein big brain (bib).